The sequence spans 115 residues: Large ribosomal subunit protein bL19 (115 aa).

This sequence belongs to the bacterial ribosomal protein bL19 family.

Its function is as follows. This protein is located at the 30S-50S ribosomal subunit interface and may play a role in the structure and function of the aminoacyl-tRNA binding site. This Francisella tularensis subsp. holarctica (strain FTNF002-00 / FTA) protein is Large ribosomal subunit protein bL19.